A 103-amino-acid chain; its full sequence is uncharacterized protein (103 aa).

The tract at residues Met1–Arg103 is disordered. 2 stretches are compositionally biased toward basic residues: residues Arg55–Ser65 and Arg74–Arg84.

The protein belongs to the epstein-barr virus RPMS1 family.

This is an uncharacterized protein from Epstein-Barr virus (strain GD1) (HHV-4).